The sequence spans 311 residues: Urease accessory protein UreD (311 aa).

This sequence belongs to the UreD family. As to quaternary structure, ureD, UreF and UreG form a complex that acts as a GTP-hydrolysis-dependent molecular chaperone, activating the urease apoprotein by helping to assemble the nickel containing metallocenter of UreC. The UreE protein probably delivers the nickel.

The protein localises to the cytoplasm. In terms of biological role, required for maturation of urease via the functional incorporation of the urease nickel metallocenter. The sequence is that of Urease accessory protein UreD from Synechococcus sp. (strain CC9902).